The chain runs to 467 residues: Argininosuccinate lyase (467 aa).

Belongs to the lyase 1 family. Argininosuccinate lyase subfamily.

Its subcellular location is the cytoplasm. The enzyme catalyses 2-(N(omega)-L-arginino)succinate = fumarate + L-arginine. It functions in the pathway amino-acid biosynthesis; L-arginine biosynthesis; L-arginine from L-ornithine and carbamoyl phosphate: step 3/3. The sequence is that of Argininosuccinate lyase from Rhizobium johnstonii (strain DSM 114642 / LMG 32736 / 3841) (Rhizobium leguminosarum bv. viciae).